A 435-amino-acid chain; its full sequence is Probable protein arginine N-methyltransferase 6 (435 aa).

The tract at residues 1-48 (MQSGGDFSNGFHGDHHRELELEDKQGPSLSSFGRAKKRSHAGARDPRG) is disordered. Residues 12–25 (HGDHHRELELEDKQ) are compositionally biased toward basic and acidic residues. The 339-residue stretch at 80-418 (DVAYFHSYAH…KENKRFMNIH (339 aa)) folds into the SAM-dependent MTase PRMT-type domain. Residues His-93, Arg-102, Gly-126, Asp-148, and Glu-177 each contribute to the S-adenosyl-L-methionine site. Catalysis depends on residues Glu-191 and Glu-200. Positions 333–377 (PAKNTSETSIASGSSSISPSGEVNQKKRTNPSDALVLSTSPESPP) are disordered. Residues 337 to 354 (TSETSIASGSSSISPSGE) show a composition bias toward low complexity.

The protein belongs to the class I-like SAM-binding methyltransferase superfamily. Protein arginine N-methyltransferase family. PRMT6 subfamily.

Functionally, arginine methyltransferase that can both catalyze the formation of omega-N monomethylarginine (MMA) and asymmetrical dimethylarginine (aDMA). This Arabidopsis thaliana (Mouse-ear cress) protein is Probable protein arginine N-methyltransferase 6 (PRMT6).